The following is a 386-amino-acid chain: MADYYEILEVARGATPEEIKKAYRKKAVQYHPDKNPGDADAEKRFKEISEAYEVLSDEKKRQVYDRYGKEALQGAAGGGQGFSSMDEALRTFMGAFGMGGGGESIFDFFGGGNGAEFGGREGGRGARQGASKRVNINVSFEEAVKGVDKELVISNYANCNVCNGKGSSSSQGIKTCSECKGRGQVFEQRGFFSMTMACPKCHGEGKVITDPCKNCKGQGAVKEKQHIKVHIPAGVDSGMRLKMSGYGDVGQHGGPAGDLYVFINVEPHEIFEREGNDILLDLPISFAEAALGCKKEVPSLTNRACRITIPEGTQNGKIFRVKGEGFPNVHGHGKGDLLVRIFVETPTRLSERQKELLQEFSELEGPNNLPKRKGFLDKIKEFFSPN.

Residues D3–G68 form the J domain. Residues G146–K224 form a CR-type zinc finger. Zn(2+) contacts are provided by C159, C162, C176, C179, C198, C201, C212, and C215. 4 CXXCXGXG motif repeats span residues C159–G166, C176–G183, C198–G205, and C212–G219.

This sequence belongs to the DnaJ family. As to quaternary structure, homodimer. Requires Zn(2+) as cofactor.

Its subcellular location is the cytoplasm. Participates actively in the response to hyperosmotic and heat shock by preventing the aggregation of stress-denatured proteins and by disaggregating proteins, also in an autonomous, DnaK-independent fashion. Unfolded proteins bind initially to DnaJ; upon interaction with the DnaJ-bound protein, DnaK hydrolyzes its bound ATP, resulting in the formation of a stable complex. GrpE releases ADP from DnaK; ATP binding to DnaK triggers the release of the substrate protein, thus completing the reaction cycle. Several rounds of ATP-dependent interactions between DnaJ, DnaK and GrpE are required for fully efficient folding. Also involved, together with DnaK and GrpE, in the DNA replication of plasmids through activation of initiation proteins. This chain is Chaperone protein DnaJ, found in Protochlamydia amoebophila (strain UWE25).